Here is a 208-residue protein sequence, read N- to C-terminus: Glutathione S-transferase 2 (208 aa).

Residues 1-78 form the GST N-terminal domain; the sequence is MSYKLTYFSI…HLARKYNLNG (78 aa). Glutathione is bound by residues Tyr-7, Lys-42, 49-50, and 62-63; these read QL and QS. The GST C-terminal domain maps to 80-200; it reads NEMETTYIDM…YCEKRDAAKV (121 aa).

Belongs to the GST superfamily. Pi family. In terms of assembly, homodimer. Hypodermis, wall of the seminal receptacle and spermatozoa of adult worms.

It catalyses the reaction RX + glutathione = an S-substituted glutathione + a halide anion + H(+). Its function is as follows. Appears to play a central role in the parasite detoxification system. The protein is Glutathione S-transferase 2 (GST2) of Onchocerca volvulus.